The primary structure comprises 245 residues: MEEPLTVAAIFRGPFNILAISEVLKVVAAVGWSVNYIGMVHRAWKDQIPSIGILPLCCDIGWEFVYAWMFPDFSSHWQGVVRVWFFLHSAVLLVTLKVSPNDWANTPLAHRHIVFIYIFVTIVFGAGQYALAAEIGPALGFHWGGALCQFLSSSGGIAQLLSRGHTRGASYLIWFARAISTFAGFIKLCIRFQHNVDGAPWLDSPMCWFYIVTVLSFDAAYPFLYFSMRKFETPAPQREARIKKQ.

7 consecutive transmembrane segments (helical) span residues 17 to 37 (ILAI…VNYI), 51 to 71 (IGIL…WMFP), 76 to 96 (HWQG…LVTL), 113 to 133 (IVFI…ALAA), 138 to 158 (ALGF…GGIA), 170 to 190 (SYLI…KLCI), and 206 to 226 (MCWF…FLYF).

Belongs to the paxB family.

The protein localises to the membrane. Its pathway is secondary metabolite biosynthesis; terpenoid biosynthesis. Terpene cyclase; part of the gene cluster A that mediates the biosynthesis of the fungal meroterpenoid acetoxydehydroaustin. The first step of the pathway is the synthesis of 3,5-dimethylorsellinic acid by the polyketide synthase ausA. 3,5-dimethylorsellinic acid is then prenylated by the polyprenyl transferase ausN. Further epoxidation by the FAD-dependent monooxygenase ausM and cyclization by the probable terpene cyclase ausL lead to the formation of protoaustinoid A. Protoaustinoid A is then oxidized to spiro-lactone preaustinoid A3 by the combined action of the FAD-binding monooxygenases ausB and ausC, and the dioxygenase ausE. Acid-catalyzed keto-rearrangement and ring contraction of the tetraketide portion of preaustinoid A3 by ausJ lead to the formation of preaustinoid A4. The aldo-keto reductase ausK, with the help of ausH, is involved in the next step by transforming preaustinoid A4 into isoaustinone which is in turn hydroxylated by the P450 monooxygenase ausI to form austinolide. The cytochrome P450 monooxygenase ausG then modifies austinolide to austinol. Austinol is further acetylated to austin by the O-acetyltransferase ausP, which spontaneously changes to dehydroaustin. The cytochrome P450 monooxygenase then converts dehydroaustin is into 7-dehydrodehydroaustin. The hydroxylation catalyzed by ausR permits the second O-acetyltransferase ausQ to add an additional acetyl group to the molecule, leading to the formation of acetoxydehydroaustin. Due to genetic rearrangements of the clusters and the subsequent loss of some enzymes, the end product of the Penicillium brasilianum austinoid biosynthesis clusters is acetoxydehydroaustin. This is Terpene cyclase ausL from Penicillium brasilianum.